A 148-amino-acid polypeptide reads, in one-letter code: Gametocyte-specific factor 1-like (148 aa).

CHHC U11-48K-type zinc fingers lie at residues 6 to 33 (FEIC…RRKN) and 40 to 67 (MATC…VNRS). Zn(2+)-binding residues include Cys-9, His-15, His-25, Cys-29, Cys-43, His-49, His-59, and Cys-63. The tract at residues 67–99 (SAVEEEDTENPLKVSPPSSEQNDDTQQVSPCLP) is disordered. Positions 82-95 (PPSSEQNDDTQQVS) are enriched in polar residues.

It belongs to the UPF0224 (FAM112) family.

The chain is Gametocyte-specific factor 1-like (GTSF1L) from Homo sapiens (Human).